The sequence spans 239 residues: 1-(5-phosphoribosyl)-5-[(5-phosphoribosylamino)methylideneamino] imidazole-4-carboxamide isomerase (239 aa).

Aspartate 8 (proton acceptor) is an active-site residue. The active-site Proton donor is the aspartate 129.

It belongs to the HisA/HisF family.

The protein localises to the cytoplasm. It carries out the reaction 1-(5-phospho-beta-D-ribosyl)-5-[(5-phospho-beta-D-ribosylamino)methylideneamino]imidazole-4-carboxamide = 5-[(5-phospho-1-deoxy-D-ribulos-1-ylimino)methylamino]-1-(5-phospho-beta-D-ribosyl)imidazole-4-carboxamide. It participates in amino-acid biosynthesis; L-histidine biosynthesis; L-histidine from 5-phospho-alpha-D-ribose 1-diphosphate: step 4/9. This Paramagnetospirillum magneticum (strain ATCC 700264 / AMB-1) (Magnetospirillum magneticum) protein is 1-(5-phosphoribosyl)-5-[(5-phosphoribosylamino)methylideneamino] imidazole-4-carboxamide isomerase.